We begin with the raw amino-acid sequence, 1277 residues long: NPC intracellular cholesterol transporter 1 (1277 aa).

Residues 1 to 22 (MSARGPAFGLLLLLLCPVQVFS) form the signal peptide. Residues 23–269 (QSCVWYGECG…WRILGLDAMY (247 aa)) are Lumenal-facing. 9 cysteine pairs are disulfide-bonded: Cys25-Cys74, Cys31-Cys42, Cys63-Cys109, Cys75-Cys113, Cys97-Cys238, Cys100-Cys160, Cys177-Cys184, Cys227-Cys243, and Cys240-Cys247. Asn41 contributes to the cholesterol binding site. An N-linked (GlcNAc...) asparagine glycan is attached at Asn70. A cholesterol-binding site is contributed by Gln79. N-linked (GlcNAc...) asparagine glycosylation is found at Asn122 and Asn135. Residues 175–205 (LLCGREAQACNATNWIEYMFNKDNGQAPFTI) form an important for cholesterol binding and cholesterol transfer from NPC1 to liposomes region. N-linked (GlcNAc...) asparagine glycosylation is found at Asn185 and Asn222. A helical transmembrane segment spans residues 270 to 290 (VIMWSSYMAFLIVFFGAFFAV). The Cytoplasmic segment spans residues 291 to 350 (WCYRKRYFVSEYTPIDGNIAFSVNSSDKGQAFCCDPLGAAFERGLRRLFAQWGAFCVRHP). The chain crosses the membrane as a helical span at residues 351-371 (GCVVFFSLAFIVACSSGLVFI). The Lumenal segment spans residues 372–621 (RVTTDPVDLW…ELNRESNSDL (250 aa)). N-linked (GlcNAc...) asparagine glycosylation is found at Asn415, Asn452, Asn459, and Asn478. Intrachain disulfides connect Cys468–Cys479 and Cys516–Cys533. The SSD domain maps to 620–785 (DLFTILISYA…ITCFVSLLGL (166 aa)). Residues 622–642 (FTILISYAIMFLYISIALGHI) form a helical membrane-spanning segment. Residues 643–653 (KSCSRLLVDSK) are Cytoplasmic-facing. The helical transmembrane segment at 654–674 (ISLGIAGILIVLSSVACSLGI) threads the bilayer. Residues 675 to 677 (FSY) lie on the Lumenal side of the membrane. A helical transmembrane segment spans residues 678–698 (IGVPLTLIVIEVIPFLVLAVG). Topologically, residues 699 to 734 (VDNIFILVQTYQRDERLQGETLDQQLGRVLGEVAPS) are cytoplasmic. Residues 735 to 755 (MFLSSFSETVAFFLGGLSVVP) traverse the membrane as a helical segment. Residues 756–759 (AVHT) lie on the Lumenal side of the membrane. The chain crosses the membrane as a helical span at residues 760 to 780 (FSLFAGMAVLIDFLLQITCFV). The Cytoplasmic segment spans residues 781-832 (SLLGLDIKRQEKNRLDVVCCVQGAEDGAGVQASESCLFRFFKNSYAPLLLKD). The helical transmembrane segment at 833–853 (WMRPIVIAVFVGVLSFSIAVL) threads the bilayer. Topologically, residues 854 to 1097 (NKVEIGLDQS…EQYLTVIDDT (244 aa)) are lumenal. Residue Asn898 is glycosylated (N-linked (GlcNAc...) asparagine). Cys909 and Cys914 form a disulfide bridge. Residues Asn916, Asn931, Asn961, Asn968, Asn1028, and Asn1063 are each glycosylated (N-linked (GlcNAc...) asparagine). 3 cysteine pairs are disulfide-bonded: Cys956/Cys1011, Cys957/Cys979, and Cys967/Cys976. A helical transmembrane segment spans residues 1098 to 1118 (IFNLGVSLGAIFLVTVVLMGC). Over 1119–1123 (ELWAT) the chain is Cytoplasmic. A helical transmembrane segment spans residues 1124-1144 (VIMCVTIAMILVNMFGVMWLW). Residue Gly1145 is a topological domain, lumenal. The chain crosses the membrane as a helical span at residues 1146-1166 (ISLNAVSLVNLVMSCGISVEF). The Cytoplasmic portion of the chain corresponds to 1167–1194 (CSHITRAFTLSTKGSRVDRAEEALAHMG). A helical transmembrane segment spans residues 1195-1215 (SSVFSGITLTKFGGIVVLAFA). Residues 1216 to 1226 (KSQIFQIFYFR) are Lumenal-facing. The helical transmembrane segment at 1227-1247 (MYLAIVLLGATHGLIFLPVLL) threads the bilayer. The Cytoplasmic portion of the chain corresponds to 1248-1277 (SYIGPSINKAKSLATQERYKGTEREQLLNF). Positions 1274 to 1277 (LLNF) are required for location in lysosomes. The Di-leucine motif signature appears at 1274-1277 (LLNF).

Belongs to the patched family. In terms of assembly, interacts (via the second lumenal domain) with NPC2. Interacts with TMEM97; the interaction may decrease NPC1 availability to the cell. Interacts with TIM1. Interacts with SLC38A9; this interaction inhibits cholesterol-mediated mTORC1 activation via its sterol transport activity. In terms of processing, N-glycosylated. As to expression, detected in corpus luteum, granulosa cells and adrenal gland.

Its subcellular location is the late endosome membrane. It localises to the lysosome membrane. It carries out the reaction cholesterol(in) = cholesterol(out). Intracellular cholesterol transporter which acts in concert with NPC2 and plays an important role in the egress of cholesterol from the endosomal/lysosomal compartment. Unesterified cholesterol that has been released from LDLs in the lumen of the late endosomes/lysosomes is transferred by NPC2 to the cholesterol-binding pocket in the N-terminal domain of NPC1. Cholesterol binds to NPC1 with the hydroxyl group buried in the binding pocket. Binds oxysterol with higher affinity than cholesterol. May play a role in vesicular trafficking in glia, a process that may be crucial for maintaining the structural and functional integrity of nerve terminals. Inhibits cholesterol-mediated mTORC1 activation throught its interaction with SLC38A9. This Sus scrofa (Pig) protein is NPC intracellular cholesterol transporter 1.